A 160-amino-acid chain; its full sequence is 2-C-methyl-D-erythritol 2,4-cyclodiphosphate synthase (160 aa).

Aspartate 9 and histidine 11 together coordinate a divalent metal cation. 4-CDP-2-C-methyl-D-erythritol 2-phosphate contacts are provided by residues 9–11 (DVH) and 35–36 (HS). A divalent metal cation is bound at residue histidine 43. 4-CDP-2-C-methyl-D-erythritol 2-phosphate-binding positions include 57-59 (DIG), 62-66 (FPDTD), 133-136 (TTTE), phenylalanine 140, and arginine 143.

The protein belongs to the IspF family. As to quaternary structure, homotrimer. It depends on a divalent metal cation as a cofactor.

The catalysed reaction is 4-CDP-2-C-methyl-D-erythritol 2-phosphate = 2-C-methyl-D-erythritol 2,4-cyclic diphosphate + CMP. Its pathway is isoprenoid biosynthesis; isopentenyl diphosphate biosynthesis via DXP pathway; isopentenyl diphosphate from 1-deoxy-D-xylulose 5-phosphate: step 4/6. Its function is as follows. Involved in the biosynthesis of isopentenyl diphosphate (IPP) and dimethylallyl diphosphate (DMAPP), two major building blocks of isoprenoid compounds. Catalyzes the conversion of 4-diphosphocytidyl-2-C-methyl-D-erythritol 2-phosphate (CDP-ME2P) to 2-C-methyl-D-erythritol 2,4-cyclodiphosphate (ME-CPP) with a corresponding release of cytidine 5-monophosphate (CMP). The polypeptide is 2-C-methyl-D-erythritol 2,4-cyclodiphosphate synthase (Haemophilus ducreyi (strain 35000HP / ATCC 700724)).